The primary structure comprises 287 residues: Ribosomal RNA small subunit methyltransferase I (287 aa).

The protein belongs to the methyltransferase superfamily. RsmI family.

It localises to the cytoplasm. The catalysed reaction is cytidine(1402) in 16S rRNA + S-adenosyl-L-methionine = 2'-O-methylcytidine(1402) in 16S rRNA + S-adenosyl-L-homocysteine + H(+). Its function is as follows. Catalyzes the 2'-O-methylation of the ribose of cytidine 1402 (C1402) in 16S rRNA. This chain is Ribosomal RNA small subunit methyltransferase I, found in Streptococcus pyogenes serotype M6 (strain ATCC BAA-946 / MGAS10394).